The following is a 617-amino-acid chain: pH-sensitive chloride channel 2 (617 aa).

Positions 1–28 are cleaved as a signal peptide; sequence MHSPGAAAYVFLQCLVALVAAVIAQSGA. The Extracellular segment spans residues 29–387; it reads DQPPTTVVEV…VHLAREMGFY (359 aa). Residue N57 is glycosylated (N-linked (GlcNAc...) asparagine). Residues 82-96 show a composition bias toward low complexity; the sequence is TVSVDSSSTTTVAST. The disordered stretch occupies residues 82-110; the sequence is TVSVDSSSTTTVASTQEPTSTTERTMSPE. Over residues 97-106 the composition is skewed to polar residues; that stretch reads QEPTSTTERT. N130 carries an N-linked (GlcNAc...) asparagine glycan. Residues 131 to 147 show a composition bias toward basic and acidic residues; that stretch reads ATDDNRPDAKSSGKDSE. A disordered region spans residues 131 to 155; the sequence is ATDDNRPDAKSSGKDSECPTLEGAD. N184, N234, N351, and N370 each carry an N-linked (GlcNAc...) asparagine glycan. A helical membrane pass occupies residues 388–408; sequence MMDYFIPSIMLVAISWVTFWL. At 409–414 the chain is on the cytoplasmic side; it reads QADQSA. The helical transmembrane segment at 415–434 threads the bilayer; it reads PRITLGTSTMLTFITLASAQ. Topologically, residues 435 to 447 are extracellular; that stretch reads GKTLPKVSYIKAS. A helical membrane pass occupies residues 448–468; that stretch reads EIWFLGCTGFIFGSLVEFAFV. The Cytoplasmic portion of the chain corresponds to 469-596; sequence NTIWRRKRNV…VAIWIDKRSR (128 aa). Residues 597-617 form a helical membrane-spanning segment; the sequence is FVFPIAFVIFNIFYWTFVYYV.

Belongs to the ligand-gated ion channel (TC 1.A.9) family.

The protein resides in the cell membrane. The catalysed reaction is chloride(in) = chloride(out). Functionally, ligand and pH-gated channel that mediates chloride transport in the mid-gut and thereby may function in larval metabolism and fluid homeostasis. Channel opening is triggered by zinc binding or, to a lesser extent, an increase in extracellular pH. The protein is pH-sensitive chloride channel 2 of Anopheles gambiae (African malaria mosquito).